The primary structure comprises 476 residues: Angiotensinogen (476 aa).

Residues 1–24 (MAPAGVSLRATILCLVAWAGLAAG) form the signal peptide. N-linked (GlcNAc...) asparagine glycans are attached at residues Asn38, Asn161, Asn295, and Asn319. Cys42 and Cys162 are oxidised to a cystine.

The protein belongs to the serpin family. In terms of processing, in response to low blood pressure, the enzyme renin/REN cleaves angiotensinogen to produce angiotensin-1. Angiotensin-1 is a substrate of ACE (angiotensin converting enzyme) that removes a dipeptide to yield the physiologically active peptide angiotensin-2. Angiotensin-1 and angiotensin-2 can be further processed to generate angiotensin-3, angiotensin-4. Angiotensin 1-9 is cleaved from angiotensin-1 by ACE2 and can be further processed by ACE to produce angiotensin 1-7, angiotensin 1-5 and angiotensin 1-4. Angiotensin 1-7 has also been proposed to be cleaved from angiotensin-2 by ACE2 or from angiotensin-1 by MME (neprilysin). The disulfide bond is labile. Angiotensinogen is present in the circulation in a near 40:60 ratio with the oxidized disulfide-bonded form, which preferentially interacts with receptor-bound renin.

It localises to the secreted. Essential component of the renin-angiotensin system (RAS), a potent regulator of blood pressure, body fluid and electrolyte homeostasis. In terms of biological role, acts directly on vascular smooth muscle as a potent vasoconstrictor, affects cardiac contractility and heart rate through its action on the sympathetic nervous system, and alters renal sodium and water absorption through its ability to stimulate the zona glomerulosa cells of the adrenal cortex to synthesize and secrete aldosterone. Acts by binding to angiotensin receptors AGTR1 and AGTR2. Also binds the DEAR/FBXW7-AS1 receptor. Its function is as follows. Stimulates aldosterone release. Functionally, is a ligand for the G-protein coupled receptor MAS1. Has vasodilator and antidiuretic effects. Has an antithrombotic effect that involves MAS1-mediated release of nitric oxide from platelets. The protein is Angiotensinogen (AGT) of Pan troglodytes (Chimpanzee).